Reading from the N-terminus, the 339-residue chain is MSASGLPFDDFRELIRNLPGPDLGAERAVREREVTLTKPAGSLGRLEEIVAWLATWTGKRTPQVNRPLVAVFAGNHGVTAKNITPFPPSVTAQMVENFAAGGAAINQICIANDLGLKVFDLALEHPTGDITEEAAMDERTCAATMAFGMEAIAGGTDLLCIGEMGIGNTTIAAAIALALFGGTAEDWVGPGTGSTGELMQRKLAAVRQAVALHQPHLQDPLEVLRCLGGREIAAMAGAILAARMEKIPVIVDGFVASAAAAVLYAANPEAIDHCMFGQVSAEPGHRKLLAKMGKEPLLDLGMRLGEGTGAALAANIVKAAALCHSGMATFEQAGVSASK.

The active-site Proton acceptor is Glu-306.

The protein belongs to the CobT family.

The enzyme catalyses 5,6-dimethylbenzimidazole + nicotinate beta-D-ribonucleotide = alpha-ribazole 5'-phosphate + nicotinate + H(+). The protein operates within nucleoside biosynthesis; alpha-ribazole biosynthesis; alpha-ribazole from 5,6-dimethylbenzimidazole: step 1/2. Functionally, catalyzes the synthesis of alpha-ribazole-5'-phosphate from nicotinate mononucleotide (NAMN) and 5,6-dimethylbenzimidazole (DMB). The protein is Nicotinate-nucleotide--dimethylbenzimidazole phosphoribosyltransferase of Brucella melitensis biotype 2 (strain ATCC 23457).